We begin with the raw amino-acid sequence, 356 residues long: Histidinol-phosphate aminotransferase (356 aa).

K214 carries the post-translational modification N6-(pyridoxal phosphate)lysine.

This sequence belongs to the class-II pyridoxal-phosphate-dependent aminotransferase family. Histidinol-phosphate aminotransferase subfamily. Homodimer. The cofactor is pyridoxal 5'-phosphate.

The catalysed reaction is L-histidinol phosphate + 2-oxoglutarate = 3-(imidazol-4-yl)-2-oxopropyl phosphate + L-glutamate. It functions in the pathway amino-acid biosynthesis; L-histidine biosynthesis; L-histidine from 5-phospho-alpha-D-ribose 1-diphosphate: step 7/9. The sequence is that of Histidinol-phosphate aminotransferase from Shigella dysenteriae serotype 1 (strain Sd197).